A 282-amino-acid chain; its full sequence is Bifunctional protein FolD (282 aa).

NADP(+) is bound by residues Gly166–Ser168 and Ser191.

Belongs to the tetrahydrofolate dehydrogenase/cyclohydrolase family. In terms of assembly, homodimer.

It carries out the reaction (6R)-5,10-methylene-5,6,7,8-tetrahydrofolate + NADP(+) = (6R)-5,10-methenyltetrahydrofolate + NADPH. It catalyses the reaction (6R)-5,10-methenyltetrahydrofolate + H2O = (6R)-10-formyltetrahydrofolate + H(+). The protein operates within one-carbon metabolism; tetrahydrofolate interconversion. In terms of biological role, catalyzes the oxidation of 5,10-methylenetetrahydrofolate to 5,10-methenyltetrahydrofolate and then the hydrolysis of 5,10-methenyltetrahydrofolate to 10-formyltetrahydrofolate. This chain is Bifunctional protein FolD, found in Acidovorax sp. (strain JS42).